The sequence spans 473 residues: Chromosomal replication initiator protein DnaA (473 aa).

Residues 1–90 are domain I, interacts with DnaA modulators; that stretch reads MSSSLWLQCL…KRVTAPKSET (90 aa). Residues 91 to 136 are domain II; the sequence is IAPARTRTAADVAAESSAPAQLQARKPVHNIWRDEEPVAVDLNHRS. Residues 137-353 form a domain III, AAA+ region region; that stretch reads NVNPKHKFNN…GALNRVIANA (217 aa). ATP is bound by residues Gly-181, Gly-183, Lys-184, and Thr-185. Positions 354–473 are domain IV, binds dsDNA; sequence NFTGRPITID…YSNLIRTLSS (120 aa).

It belongs to the DnaA family. In terms of assembly, oligomerizes as a right-handed, spiral filament on DNA at oriC.

The protein localises to the cytoplasm. In terms of biological role, plays an essential role in the initiation and regulation of chromosomal replication. ATP-DnaA binds to the origin of replication (oriC) to initiate formation of the DNA replication initiation complex once per cell cycle. Binds the DnaA box (a 9 base pair repeat at the origin) and separates the double-stranded (ds)DNA. Forms a right-handed helical filament on oriC DNA; dsDNA binds to the exterior of the filament while single-stranded (ss)DNA is stabiized in the filament's interior. The ATP-DnaA-oriC complex binds and stabilizes one strand of the AT-rich DNA unwinding element (DUE), permitting loading of DNA polymerase. After initiation quickly degrades to an ADP-DnaA complex that is not apt for DNA replication. Binds acidic phospholipids. The polypeptide is Chromosomal replication initiator protein DnaA (Vibrio atlanticus (strain LGP32) (Vibrio splendidus (strain Mel32))).